The sequence spans 569 residues: Isochorismate synthase 1, chloroplastic (569 aa).

The transit peptide at 1–45 (MASLQFSSQFLGSNTKTHSSIISISRSYSPTPFTRFSRKKYESCS) directs the protein to the chloroplast.

The protein belongs to the isochorismate synthase family. In terms of assembly, monomer. Requires Mg(2+) as cofactor. As to expression, leaves.

The protein localises to the plastid. It is found in the chloroplast. It carries out the reaction chorismate = isochorismate. It participates in siderophore biosynthesis; salicylate biosynthesis. Functionally, isochorismate synthase involved in the synthesis of salicylic acid (SA) required for both local and systemic acquired resistance (LAR and SAR) while SA synthesized through the phenylalanine ammonium lyase (PAL) pathway seems to potentiate plant cell death. Also involved in phylloquinone (vitamin K1) synthesis. Has no isochorismate pyruvate lyase (IPL) activity. This Arabidopsis thaliana (Mouse-ear cress) protein is Isochorismate synthase 1, chloroplastic (ICS1).